Consider the following 343-residue polypeptide: TATA box-binding protein-like 2 (343 aa).

Residues 71–152 form a disordered region; the sequence is PDEVTQENKD…SDSLSLASIT (82 aa). The segment covering 76 to 90 has biased composition (basic and acidic residues); that stretch reads QENKDQPVISKHETE. The span at 94 to 127 shows a compositional bias: low complexity; sequence ESQSPQSRLPSPSEQDVGLGLNSSSLSNSHSQLH. Over residues 143–152 the composition is skewed to polar residues; that stretch reads SDSLSLASIT.

It belongs to the TBP family. Interacts with TAF3. In terms of tissue distribution, ubiquitously expressed in all tissues examined with highest levels in heart, lung, ovary, spleen and testes.

It localises to the cytoplasm. The protein localises to the nucleus. In terms of biological role, transcription factor required in complex with TAF3 for the differentiation of myoblasts into myocytes. The complex replaces TFIID at specific promoters at an early stage in the differentiation process. This is TATA box-binding protein-like 2 from Homo sapiens (Human).